Here is a 1239-residue protein sequence, read N- to C-terminus: GRB10-interacting GYF protein 2 (1239 aa).

Disordered regions lie at residues 105–184 and 206–409; these read TNRG…GVRG and DERG…IVPA. A compositionally biased stretch (basic and acidic residues) spans 153-181; that stretch reads GAREMHRSQSWEERGDRRFEKPARKEPDG. Over residues 231-240 the composition is skewed to acidic residues; the sequence is CLDDAEDETG. Positions 241 to 252 are enriched in polar residues; it reads TFDSSGAFLSSK. Basic and acidic residues-rich tracts occupy residues 257 to 272 and 318 to 331; these read VQKEPIPEEQEIDFHP and PDHKTSSPVRRTDM. The 49-residue stretch at 488–536 folds into the GYF domain; it reads QQKWYYKDPQGEIQGPFSNREMAEWYQAGYFPMTLLLRRVCDETFQPLG. Over residues 678–737 the composition is skewed to basic and acidic residues; it reads DKVKAAKMEQERREAELRAKQEEEEQHRRKEAEEERKRREEEELARRKQEEALQRQKELA. Disordered stretches follow at residues 678–749, 763–812, 843–960, and 1057–1085; these read DKVK…ERQR, EEER…RQLE, AEEE…KPTG, and APRNATSKNKNNASKSAGSNSRQSKKVEQ. A compositionally biased stretch (basic and acidic residues) spans 843–862; it reads AEEEERNKREEAQRQKELQR. The segment covering 863–885 has biased composition (low complexity); it reads QRQQQQEALRRLQLQQQQQQLAQ. Polar residues predominate over residues 888–900; that stretch reads LPSSSTWGQQVTP. Residues 901–913 show a composition bias toward low complexity; the sequence is SAASQSALSLAEI. The segment covering 914 to 933 has biased composition (basic and acidic residues); sequence QKLEEERERQKLQEQRHQQQ. Composition is skewed to low complexity over residues 934 to 948 and 1060 to 1077; these read ELKALQQQQQQQQQK and NATSKNKNNASKSAGSNS.

The protein belongs to the GIGYF family. Component of the 4EHP-GYF2 complex.

Key component of the 4EHP-GYF2 complex, a multiprotein complex that acts as a repressor of translation initiation. In association with EIF4E2, assists ribosome-associated quality control (RQC) by sequestering the mRNA cap, blocking ribosome initiation and decreasing the translational load on problematic messages. The protein is GRB10-interacting GYF protein 2 (gigyf2) of Xenopus laevis (African clawed frog).